A 235-amino-acid chain; its full sequence is Phosphoribosylaminoimidazole-succinocarboxamide synthase (235 aa).

This sequence belongs to the SAICAR synthetase family.

The catalysed reaction is 5-amino-1-(5-phospho-D-ribosyl)imidazole-4-carboxylate + L-aspartate + ATP = (2S)-2-[5-amino-1-(5-phospho-beta-D-ribosyl)imidazole-4-carboxamido]succinate + ADP + phosphate + 2 H(+). It participates in purine metabolism; IMP biosynthesis via de novo pathway; 5-amino-1-(5-phospho-D-ribosyl)imidazole-4-carboxamide from 5-amino-1-(5-phospho-D-ribosyl)imidazole-4-carboxylate: step 1/2. The sequence is that of Phosphoribosylaminoimidazole-succinocarboxamide synthase from Streptococcus sanguinis (strain SK36).